The primary structure comprises 119 residues: Beta-2-microglobulin (119 aa).

A signal peptide spans 1 to 20 (MACFVVVALLVLLSLSGLEA). In terms of domain architecture, Ig-like C1-type spans 25 to 114 (PKIQVYSRHP…VTFSTPKTVK (90 aa)). Cysteines 45 and 100 form a disulfide.

It belongs to the beta-2-microglobulin family. As to quaternary structure, heterodimer of an alpha chain and a beta chain. Beta-2-microglobulin is the beta-chain of major histocompatibility complex class I molecules.

It is found in the secreted. Functionally, component of the class I major histocompatibility complex (MHC). Involved in the presentation of peptide antigens to the immune system. The polypeptide is Beta-2-microglobulin (B2M) (Leontopithecus chrysopygus (Golden-rumped lion tamarin)).